We begin with the raw amino-acid sequence, 447 residues long: Guanine nucleotide-binding protein alpha-1 subunit (447 aa).

G2 carries the N-myristoyl glycine lipid modification. A lipid anchor (S-palmitoyl cysteine) is attached at C3. Residues 40–447 (NEVKLLLLGA…QQNLKKSGIL (408 aa)) form the G-alpha domain. Residues 43 to 56 (KLLLLGAGESGKST) are G1 motif. Positions 51, 52, 53, 54, 55, 56, 269, 275, 297, 363, 364, 366, and 419 each coordinate GTP. Position 55 (S55) interacts with Mg(2+). Residues 267–275 (DILKGRIKT) are G2 motif. T275 serves as a coordination point for Mg(2+). A G3 motif region spans residues 290-299 (FKVYDAGGQR). Residues 359-366 (ILFLNKVD) form a G4 motif region. Residues 417–422 (TCATDT) are G5 motif.

The protein belongs to the G-alpha family. In terms of assembly, g proteins are composed of 3 units; alpha, beta and gamma. The alpha chain contains the guanine nucleotide binding site. Requires Mg(2+) as cofactor.

In terms of biological role, guanine nucleotide-binding proteins (G proteins) are involved as modulators or transducers in various transmembrane signaling systems. This protein is involved in the mating response pathway. The sequence is that of Guanine nucleotide-binding protein alpha-1 subunit (GPA1) from Kluyveromyces lactis (strain ATCC 8585 / CBS 2359 / DSM 70799 / NBRC 1267 / NRRL Y-1140 / WM37) (Yeast).